We begin with the raw amino-acid sequence, 206 residues long: Dephospho-CoA kinase (206 aa).

In terms of domain architecture, DPCK spans Thr4 to Phe200. Gly12–Thr17 provides a ligand contact to ATP.

Belongs to the CoaE family.

Its subcellular location is the cytoplasm. The enzyme catalyses 3'-dephospho-CoA + ATP = ADP + CoA + H(+). The protein operates within cofactor biosynthesis; coenzyme A biosynthesis; CoA from (R)-pantothenate: step 5/5. Its function is as follows. Catalyzes the phosphorylation of the 3'-hydroxyl group of dephosphocoenzyme A to form coenzyme A. This Salmonella typhimurium (strain LT2 / SGSC1412 / ATCC 700720) protein is Dephospho-CoA kinase.